The following is a 197-amino-acid chain: UPF0056 inner membrane protein YhgN (197 aa).

Over 1–3 (MNE) the chain is Periplasmic. A helical transmembrane segment spans residues 4–24 (IISAAVLLILIMDPLGNLPIF). Over 25 to 44 (MSVLKHTEPKRRRAIMVREL) the chain is Cytoplasmic. A helical transmembrane segment spans residues 45-65 (LIALLVMLVFLFAGEKILAFL). The Periplasmic segment spans residues 66–71 (SLRAET). Residues 72-92 (VSISGGIILFLIAIKMIFPSA) traverse the membrane as a helical segment. At 93–105 (SGNSSGLPAGEEP) the chain is on the cytoplasmic side. Residues 106–126 (FIVPLAIPLVAGPTILATLML) form a helical membrane-spanning segment. Topologically, residues 127 to 138 (LSHQYPNQMGHL) are periplasmic. A helical transmembrane segment spans residues 139–159 (VIALLLAWGGTFVILLQSSLF). Over 160 to 173 (LRLLGEKGVNALER) the chain is Cytoplasmic. Residues 174-194 (LMGLILVMMATQMFLDGIRMW) traverse the membrane as a helical segment. The Periplasmic segment spans residues 195 to 197 (MKG).

Belongs to the UPF0056 (MarC) family.

It localises to the cell inner membrane. The sequence is that of UPF0056 inner membrane protein YhgN (yhgN) from Escherichia coli O157:H7.